A 58-amino-acid chain; its full sequence is Large ribosomal subunit protein uL30 (58 aa).

Belongs to the universal ribosomal protein uL30 family. As to quaternary structure, part of the 50S ribosomal subunit.

This chain is Large ribosomal subunit protein uL30, found in Acinetobacter baumannii (strain AB307-0294).